Here is a 399-residue protein sequence, read N- to C-terminus: tRNA-specific 2-thiouridylase MnmA (399 aa).

ATP-binding positions include 18–25 (AMSGGVDS) and leucine 44. Cysteine 112 acts as the Nucleophile in catalysis. A disulfide bridge connects residues cysteine 112 and cysteine 213. An ATP-binding site is contributed by glycine 136. Residues 163–165 (RDQ) form an interaction with tRNA region. Cysteine 213 acts as the Cysteine persulfide intermediate in catalysis.

The protein belongs to the MnmA/TRMU family.

It is found in the cytoplasm. It catalyses the reaction S-sulfanyl-L-cysteinyl-[protein] + uridine(34) in tRNA + AH2 + ATP = 2-thiouridine(34) in tRNA + L-cysteinyl-[protein] + A + AMP + diphosphate + H(+). In terms of biological role, catalyzes the 2-thiolation of uridine at the wobble position (U34) of tRNA, leading to the formation of s(2)U34. This is tRNA-specific 2-thiouridylase MnmA from Rhizobium rhizogenes (strain K84 / ATCC BAA-868) (Agrobacterium radiobacter).